A 149-amino-acid polypeptide reads, in one-letter code: Deoxyuridine 5'-triphosphate nucleotidohydrolase (149 aa).

Substrate contacts are provided by residues 68–70, asparagine 81, and 85–87; these read RSG and LID.

The protein belongs to the dUTPase family. The cofactor is Mg(2+).

The enzyme catalyses dUTP + H2O = dUMP + diphosphate + H(+). Its pathway is pyrimidine metabolism; dUMP biosynthesis; dUMP from dCTP (dUTP route): step 2/2. This enzyme is involved in nucleotide metabolism: it produces dUMP, the immediate precursor of thymidine nucleotides and it decreases the intracellular concentration of dUTP so that uracil cannot be incorporated into DNA. This is Deoxyuridine 5'-triphosphate nucleotidohydrolase from Nitrosomonas eutropha (strain DSM 101675 / C91 / Nm57).